A 930-amino-acid chain; its full sequence is Bifunctional uridylyltransferase/uridylyl-removing enzyme (930 aa).

The interval 1 to 387 (MAPASEAGPA…IMGLFRRKKR (387 aa)) is uridylyltransferase. Positions 388-741 (LKPEYSLVNG…LDPDPDRDAT (354 aa)) are uridylyl-removing. The HD domain maps to 504 to 626 (VDEHTIQCIS…VRSKKRLDLL (123 aa)). 2 ACT domains span residues 742–818 (RACF…VVAR) and 852–927 (IIEV…GAER).

This sequence belongs to the GlnD family. Mg(2+) serves as cofactor.

It catalyses the reaction [protein-PII]-L-tyrosine + UTP = [protein-PII]-uridylyl-L-tyrosine + diphosphate. It carries out the reaction [protein-PII]-uridylyl-L-tyrosine + H2O = [protein-PII]-L-tyrosine + UMP + H(+). Its activity is regulated as follows. Uridylyltransferase (UTase) activity is inhibited by glutamine, while glutamine activates uridylyl-removing (UR) activity. In terms of biological role, modifies, by uridylylation and deuridylylation, the PII regulatory proteins (GlnB and homologs), in response to the nitrogen status of the cell that GlnD senses through the glutamine level. Under low glutamine levels, catalyzes the conversion of the PII proteins and UTP to PII-UMP and PPi, while under higher glutamine levels, GlnD hydrolyzes PII-UMP to PII and UMP (deuridylylation). Thus, controls uridylylation state and activity of the PII proteins, and plays an important role in the regulation of nitrogen fixation and metabolism. In Cereibacter sphaeroides (strain ATCC 17023 / DSM 158 / JCM 6121 / CCUG 31486 / LMG 2827 / NBRC 12203 / NCIMB 8253 / ATH 2.4.1.) (Rhodobacter sphaeroides), this protein is Bifunctional uridylyltransferase/uridylyl-removing enzyme.